The chain runs to 139 residues: Single-stranded DNA-binding protein 2 (139 aa).

An SSB domain is found at Met1–Glu104. The interval Leu103 to Phe139 is disordered. Positions Lys106–Asn125 are enriched in low complexity. Residues Asn129–Phe139 show a composition bias toward acidic residues.

Homotetramer.

The polypeptide is Single-stranded DNA-binding protein 2 (ssb-p) (Staphylococcus aureus (strain COL)).